We begin with the raw amino-acid sequence, 204 residues long: MPVLNTLRRSLLILALACTLPSLAMDRNALLDQANVLLLPRERAIPQLELVDQNDQPFSTETLKGRWHILFFGFTACPDICPTTLSEMRRLFGQLPAETREQLQLVLITADPARDTPQQLKTYLSYYRAGFIGLTGNMEQLQRLSKALGLPFVPATETEGDYSVSHSGNLALVGPDGSLRGHIRAPLKLDGLQRVLPQILDNER.

Residues Cys77, Cys81, and His166 each contribute to the Cu cation site.

This sequence belongs to the SCO1/2 family.

The sequence is that of Putative copper-binding protein (scoP) from Stutzerimonas stutzeri (Pseudomonas stutzeri).